The sequence spans 647 residues: Exoribonuclease 2 (647 aa).

Residues 191 to 517 (REDLCALPFV…VNHRLLKALI (327 aa)) form the RNB domain. An S1 motif domain is found at 563-645 (PTPFNAEIID…DTRSLIARPF (83 aa)).

The protein belongs to the RNR ribonuclease family. RNase II subfamily.

It localises to the cytoplasm. It catalyses the reaction Exonucleolytic cleavage in the 3'- to 5'-direction to yield nucleoside 5'-phosphates.. In terms of biological role, involved in mRNA degradation. Hydrolyzes single-stranded polyribonucleotides processively in the 3' to 5' direction. The polypeptide is Exoribonuclease 2 (Edwardsiella piscicida).